The sequence spans 345 residues: MNSELFSPYTIKDVTLKNRIVMSPMCMYSSENEDGQVTNFHLIHYGTRAAGQVGLVMIEATAVLPEGRISNKDLGIWDDSLIEGLHKTTTFIHDNGAKAAIQLAHAGRKAELETDALAPSAIPFNETMKIPVEMSIQQIKNTILAFQQAAVRSKQAGFDVIEIHGAHGYLINEFLSPLSNKRTDEYGGSPEKRYRFLREIIDSINEVWNGPLFVRISANDYHPDGLTVQDYIQYTKWMKEQGVDLIDCSSGAVVPARIDVYPGYQVQYAKHIKEHANIATGAVGLITTGAQAEQILTNNEADLIFIGRELLRNPYFPRIAANELGFELEEPYQYERAPGKISTNK.

Residue 23–26 coordinates FMN; it reads SPMC. A substrate-binding site is contributed by Tyr-28. The FMN site is built by Ala-60 and Gln-102. 164-167 lines the substrate pocket; it reads HGAH. FMN-binding positions include Arg-215 and 307–308; that span reads GR.

Belongs to the NADH:flavin oxidoreductase/NADH oxidase family. NamA subfamily. As to quaternary structure, homotetramer. FMN serves as cofactor.

The enzyme catalyses A + NADPH + H(+) = AH2 + NADP(+). Catalyzes the reduction of the double bond of an array of alpha,beta-unsaturated aldehydes and ketones. It also reduces the nitro group of nitroester and nitroaromatic compounds. It could have a role in detoxification processes. The polypeptide is NADPH dehydrogenase (Bacillus thuringiensis subsp. konkukian (strain 97-27)).